Consider the following 944-residue polypeptide: Leucine--tRNA ligase 2 (944 aa).

The 'HIGH' region signature appears at 36–46 (PYPNSPFHLGH). The short motif at 621–625 (KMSKS) is the 'KMSKS' region element. Lys624 provides a ligand contact to ATP.

It belongs to the class-I aminoacyl-tRNA synthetase family.

Its subcellular location is the cytoplasm. The catalysed reaction is tRNA(Leu) + L-leucine + ATP = L-leucyl-tRNA(Leu) + AMP + diphosphate. This is Leucine--tRNA ligase 2 from Sulfurisphaera tokodaii (strain DSM 16993 / JCM 10545 / NBRC 100140 / 7) (Sulfolobus tokodaii).